The primary structure comprises 1967 residues: RQC trigger complex helicase SLH1 (1967 aa).

Residues 297–485 (PVAYKTNENM…FLGVNRQIGM (189 aa)) form the Helicase ATP-binding 1 domain. 310 to 317 (APTGAGKT) provides a ligand contact to ATP. Residues 427-430 (DEVH) carry the DEVH box motif. Positions 516 to 735 (NIDKVAYDKL…NVDEAIEWLG (220 aa)) constitute a Helicase C-terminal 1 domain. Residues 795-1100 (AKDLGRVSSD…GCESTHAISF (306 aa)) enclose the SEC63 1 domain. The region spanning 1149-1324 (YTLYNTNENA…WLGVKDHGLY (176 aa)) is the Helicase ATP-binding 2 domain. 1162 to 1169 (SPTGSGKT) provides a ligand contact to ATP. The DEAH box signature appears at 1266 to 1269 (DEIH). Positions 1355–1550 (MNKPVFMAIK…SLHKVLDDHL (196 aa)) constitute a Helicase C-terminal 2 domain. In terms of domain architecture, SEC63 2 spans 1626-1776 (ATPFLSISSY…MMQCIKQGYW (151 aa)).

Belongs to the helicase family. SKI2 subfamily. Component of the RQT (ribosome quality control trigger) complex, composed of SLH1, CUE3, and RQT4. Interacts with CUE3. Interacts with RQT4. Interacts with HEL2. Associates with translating ribosomes.

The protein localises to the cytoplasm. It localises to the cytosol. It catalyses the reaction ATP + H2O = ADP + phosphate + H(+). Its function is as follows. Involved in activation of the ribosome quality control (RQC) pathway, a pathway that degrades nascent peptide chains during problematic translation. Drives the splitting of stalled ribosomes that are polyubiquitinated in a HEL2-dependent manner, as part of the ribosome quality control trigger (RQT) complex. Also represses the translation of non-poly(A) mRNAs together with SKI2. May block translation by inhibiting translation initiation factor 5B (FUN12) action on mRNAs lacking a 3' poly(A) structure. Involved in antiviral defense, preventing L-A dsRNA virus propagation by specifically blocking translation of viral mRNAs. This Saccharomyces cerevisiae (strain ATCC 204508 / S288c) (Baker's yeast) protein is RQC trigger complex helicase SLH1.